The sequence spans 360 residues: MSRVYNFSAGPAAIPEEVLFTVRDELLDWHGIGMSIAEVSHRGEEFIGVAEEAERDLRELLAVPESYHILFLQGGSRLQFAMVPMNLLANHKKAVYIDSGVWSNLAIREAKNYCDPHLATNAKELNYTGIPDQATWDMPNEAAYFYYVDNETVNGIEFPFIPDTDLTLVCDMSSNLLSRPFDVSRYGLIFACAQKNMGLAGLTIVIVHDDLLKRSPLPTTPSYLQYALHAKERSFINTPPTFAWYLAGLIFKWVKNQGGVAVLAERNQRKAAKLYKFIDKSNFFDNPINPTYRSRMNVIFRLADERLNSLFLKEATENGLANLKGHRLLGGMRASIYNAMTEEGVDALINFMGQFEKRHG.

Arg-42 contributes to the L-glutamate binding site. Positions 102, 152, 171, and 194 each coordinate pyridoxal 5'-phosphate. The residue at position 195 (Lys-195) is an N6-(pyridoxal phosphate)lysine. Pyridoxal 5'-phosphate is bound at residue 237–238; it reads NT.

Belongs to the class-V pyridoxal-phosphate-dependent aminotransferase family. SerC subfamily. In terms of assembly, homodimer. The cofactor is pyridoxal 5'-phosphate.

It is found in the cytoplasm. It catalyses the reaction O-phospho-L-serine + 2-oxoglutarate = 3-phosphooxypyruvate + L-glutamate. It carries out the reaction 4-(phosphooxy)-L-threonine + 2-oxoglutarate = (R)-3-hydroxy-2-oxo-4-phosphooxybutanoate + L-glutamate. The protein operates within amino-acid biosynthesis; L-serine biosynthesis; L-serine from 3-phospho-D-glycerate: step 2/3. It participates in cofactor biosynthesis; pyridoxine 5'-phosphate biosynthesis; pyridoxine 5'-phosphate from D-erythrose 4-phosphate: step 3/5. Its function is as follows. Catalyzes the reversible conversion of 3-phosphohydroxypyruvate to phosphoserine and of 3-hydroxy-2-oxo-4-phosphonooxybutanoate to phosphohydroxythreonine. The chain is Phosphoserine aminotransferase from Coxiella burnetii (strain CbuG_Q212) (Coxiella burnetii (strain Q212)).